The following is a 71-amino-acid chain: Large ribosomal subunit protein bL31 (71 aa).

It belongs to the bacterial ribosomal protein bL31 family. Type A subfamily. As to quaternary structure, part of the 50S ribosomal subunit.

Functionally, binds the 23S rRNA. The polypeptide is Large ribosomal subunit protein bL31 (Metamycoplasma arthritidis (strain 158L3-1) (Mycoplasma arthritidis)).